The sequence spans 160 residues: Cytochrome c-type biogenesis protein CcmE (160 aa).

Over 1–8 (MNPRRKQR) the chain is Cytoplasmic. The helical; Signal-anchor for type II membrane protein transmembrane segment at 9–29 (LTWVAILVIGVSVATGLMLYA) threads the bilayer. At 30 to 160 (LSQSIDLFYT…PNTVEKGEGQ (131 aa)) the chain is on the periplasmic side. Heme is bound by residues histidine 130 and tyrosine 134.

The protein belongs to the CcmE/CycJ family.

It is found in the cell inner membrane. Heme chaperone required for the biogenesis of c-type cytochromes. Transiently binds heme delivered by CcmC and transfers the heme to apo-cytochromes in a process facilitated by CcmF and CcmH. This Idiomarina loihiensis (strain ATCC BAA-735 / DSM 15497 / L2-TR) protein is Cytochrome c-type biogenesis protein CcmE.